We begin with the raw amino-acid sequence, 3253 residues long: tRNA nuclease CdiA (3253 aa).

An N-terminal signal peptide occupies residues 1 to 32 (MHQPPVRFPYRLLSYLISTIIAGQPLLPAVGA). The tract at residues 36–322 (PQNGAGMDKA…AGGNLSVTGT (287 aa)) is two-partner system transport domain (TPS). The segment at 351 to 1384 (GELTAGQNAM…ITIRTGHLLN (1034 aa)) is FHA-1. The interval 1385-1656 (QREGINETKS…DLASGIVEGN (272 aa)) is receptor binding domain (RBD). Residues 1657-1841 (YPLPSGNNGY…LSPKDVTLQN (185 aa)) form a YP domain region. Residues 1842 to 1902 (GSIISGQNVH…GLKAMGDINN (61 aa)) are periplasmic FHA-1 repeat (pFR). The tract at residues 1944-2548 (TYTGSIASVS…TSKYDSKQTS (605 aa)) is FHA-2. 4 disordered regions span residues 2228–2252 (GSSK…TIGS), 2362–2410 (TGDP…GKNR), 2483–2503 (GSEK…GKTV), and 2687–2712 (IRDR…DSIS). 3 stretches are compositionally biased toward polar residues: residues 2240–2252 (GTTQ…TIGS), 2368–2403 (TGVS…NLSV), and 2490–2503 (TEWT…GKTV). The pretoxin (PT) domain stretch occupies residues 2888–2930 (SDLSEEQKQTISTLATVSAGLAGGLTGNSSASAAVGAQSGKNA). The VDNN CT cleavage motif signature appears at 2931–2934 (VDNN). The C-terminal effector domain (CT) stretch occupies residues 2931–3253 (VDNNYLSVSE…TGIVSNFHPK (323 aa)).

The protein in the N-terminal section; belongs to the CdiA toxin family. In the C-terminal section; belongs to the bacterial EndoU family. As to quaternary structure, forms a 1:1 complex with cognate immunity protein CdiI-STECO31. Requires tRNase activity is metal-independent. as cofactor. The CT domain is cleaved upon binding to receptor Tsx on target cells.

It localises to the secreted. The protein resides in the target cell. It is found in the target cell cytoplasm. Toxic component of a toxin-immunity protein module, which functions as a cellular contact-dependent growth inhibition (CDI) system. CDI modules allow bacteria to communicate with and inhibit the growth of closely related neighboring target bacteria in a contact-dependent fashion (target cell counts decrease 1000- to 10000-fold with this CDI). Uses outer membrane nucleoside transporter Tsx on target cells as a receptor. Gains access to the cytoplasm of target cells by using integral inner membrane protein PTS system glucose-specific EIICB component (ptsG). Targeting of the C-terminal domain (CT) domain (residues 2931-3253) in the absence of immunity protein inhibits cell growth and causes tRNA(UUC-Glu) cleavage; expression of cognate immunity protein CdiI-STECO31 neutralizes growth inhibition leaving tRNA(UUC-Glu) is intact, whereas non-cognate immunity proteins do not confer protection. The CT domain cleaves tRNA; it is most active against tRNA(UUC-Glu), but also has modest activity against tRNA(GUC-Asp), tRNA(UUG-Gln), tRNA(CCC-Gly), tRNA(UCC-Gly), tRNA(GCC-Gly), tRNA(UUU-Lys), tRNA(GGU-Thr) and tRNA(CCA-Trp); tRNA cleavage is inhibited by cognate immunity protein CdiI. Cleavage of tRNA(UUC-Glu) occurs in the anticodon loop between cytosine(37) and 2-methyladenosine(38) (C37-m2A38) and probably also occurs in the anticodon loop of other tRNAs as well. Functionally, the CdiA protein is thought to be exported from the cell through the central lumen of CdiB, the other half of its two-partner system (TPS). The TPS domain probably remains associated with CdiB while the FHA-1 domain forms an extended filament (33 nm long) with the receptor-binding domain (RBD) at its extremity; in the secretion arrested state the C-terminus of the RBD and YP domains form a hairpin-like structure as the FHA-2, PT and CT domains are periplasmic. The YP domain is probably responsible for this arrest at the point where it re-enters the host cell periplasm. Upon binding to a target cell outer membrane receptor (Tsx for this CDI) a signal is transmitted to activate secretion. The filament becomes about 5 nm longer, the rest of CdiA is secreted and the FHA-2 domain becomes stably associated with the target cell's outer membrane where it facilitates entry of the toxic CT domain into the target cell periplasm. From there the toxic CT domain is cleaved and gains access to the target cell cytoplasm via an inner membrane protein (PTS system glucose-specific EIICB component, ptsG for this CDI). The protein is tRNA nuclease CdiA of Escherichia coli (strain STEC_O31).